A 320-amino-acid polypeptide reads, in one-letter code: Glutaminyl-peptide cyclotransferase (320 aa).

Over residues Met1–Lys12 the composition is skewed to basic residues. The segment at Met1–Ser22 is disordered. Residues Met1–Arg36 are Cytoplasmic-facing. The chain crosses the membrane as a helical; Signal-anchor for type II membrane protein span at residues Phe37–Phe57. Over Asn58–Val320 the chain is Lumenal. N-linked (GlcNAc...) asparagine glycosylation is found at Asn99 and Asn163.

This sequence belongs to the plant glutaminyl-peptide cyclotransferase family. Glycosylated.

The protein resides in the endoplasmic reticulum membrane. It catalyses the reaction N-terminal L-glutaminyl-[peptide] = N-terminal 5-oxo-L-prolyl-[peptide] + NH4(+). Its function is as follows. Converts glutamine and N-terminal glutamyl residues in peptides to 5-oxoproline and 5-oxoproline residues. Not involved in the major pathway for 5-oxoproline production. This is Glutaminyl-peptide cyclotransferase (QCT) from Arabidopsis thaliana (Mouse-ear cress).